Consider the following 259-residue polypeptide: Diaminopimelate epimerase (259 aa).

Positions 14, 42, and 60 each coordinate substrate. Cysteine 69 (proton donor) is an active-site residue. Substrate is bound by residues 70 to 71 (GN), asparagine 151, asparagine 184, and 202 to 203 (ER). Cysteine 211 functions as the Proton acceptor in the catalytic mechanism. 212–213 (GS) lines the substrate pocket.

This sequence belongs to the diaminopimelate epimerase family. Homodimer.

The protein localises to the cytoplasm. The catalysed reaction is (2S,6S)-2,6-diaminopimelate = meso-2,6-diaminopimelate. Its pathway is amino-acid biosynthesis; L-lysine biosynthesis via DAP pathway; DL-2,6-diaminopimelate from LL-2,6-diaminopimelate: step 1/1. Catalyzes the stereoinversion of LL-2,6-diaminopimelate (L,L-DAP) to meso-diaminopimelate (meso-DAP), a precursor of L-lysine and an essential component of the bacterial peptidoglycan. This Wolbachia sp. subsp. Brugia malayi (strain TRS) protein is Diaminopimelate epimerase.